We begin with the raw amino-acid sequence, 275 residues long: Lincomycin biosynthesis protein LmbN (275 aa).

In terms of domain architecture, Carrier spans 1 to 78; sequence MSTLDEVLAL…AIAATVARIT (78 aa). S37 is subject to O-(pantetheine 4'-phosphoryl)serine. The 163-residue stretch at 113-275 folds into the SIS domain; that stretch reads LFDTWHAGGT…HHALCVAHAP (163 aa).

It functions in the pathway antibiotic biosynthesis; lincomycin biosynthesis. This chain is Lincomycin biosynthesis protein LmbN (lmbN), found in Streptomyces lincolnensis.